The primary structure comprises 366 residues: Chorismate synthase (366 aa).

Arg48 and Arg54 together coordinate NADP(+). FMN-binding positions include 125–127 (RSS), 238–239 (NA), Gly278, 293–297 (KPTSS), and Arg319.

This sequence belongs to the chorismate synthase family. Homotetramer. It depends on FMNH2 as a cofactor.

It catalyses the reaction 5-O-(1-carboxyvinyl)-3-phosphoshikimate = chorismate + phosphate. The protein operates within metabolic intermediate biosynthesis; chorismate biosynthesis; chorismate from D-erythrose 4-phosphate and phosphoenolpyruvate: step 7/7. Catalyzes the anti-1,4-elimination of the C-3 phosphate and the C-6 proR hydrogen from 5-enolpyruvylshikimate-3-phosphate (EPSP) to yield chorismate, which is the branch point compound that serves as the starting substrate for the three terminal pathways of aromatic amino acid biosynthesis. This reaction introduces a second double bond into the aromatic ring system. The chain is Chorismate synthase from Dechloromonas aromatica (strain RCB).